Here is a 106-residue protein sequence, read N- to C-terminus: uncharacterized protein (106 aa).

This is an uncharacterized protein from Invertebrate iridescent virus 3 (IIV-3).